The primary structure comprises 141 residues: Large ribosomal subunit protein uL6 (141 aa).

It belongs to the universal ribosomal protein uL6 family.

This Haemonchus contortus (Barber pole worm) protein is Large ribosomal subunit protein uL6.